The chain runs to 581 residues: MKENVASRAVFILLLFLNASLLNGQSPPGKPKIIKCRSPGKETFTCWWEPGSDGGLPTNYTLTYHKEGETLIHECPDYKTGGPNTCYFSKKHTSIWKIYVITVNAINQMGVSSSDPLYVDVTYIVEPEPPANLTLELKHPEDRKPYLWIKWFPPTLTDVKSGWFMIQYEIRLKPETAADWEIHFAAKQTQLKIFSLYPGQKYLVQVRCKPDHGYWSEWSPESSIQIPNDFPVNDTTVWIFVAVLSAVICLIMVWAVALKGYSMMTCILPPVPGPKIKGFDIHLLEKGKSEELLRALESQDFPPTSDCEDLLMEFIEVDDSEDQQLMPRPSKEHMEQGVKPMHMDPDSDSGRGSCDSPSLFSEKCDEPQAHPFKFYTPEDPEKLENPETNLTCLQAPQSTSREDKIPYFHANGPKSSTWPFPQPPSLHNPRYSYHNIADVCELALGMAGTTATLLDQTDQHALKPSKTIETGGEGKAAKQRESEGCSSKPDQDTGWPLPQDKTPLISAKPLEYVEIHKVSQDGVLALFPKQNEKVGAPETSKEYSKVSRVTDSNILVLVPDTQVQNLTLLEEPAKEAPPALP.

Residues 1 to 24 (MKENVASRAVFILLLFLNASLLNG) form the signal peptide. Over 25 to 234 (QSPPGKPKII…QIPNDFPVND (210 aa)) the chain is Extracellular. 2 consecutive Fibronectin type-III domains span residues 27–127 (PPGK…IVEP) and 129–229 (PPAN…IPND). Cys36 and Cys46 are disulfide-bonded. N-linked (GlcNAc...) asparagine glycosylation occurs at Asn59. A disulfide bridge links Cys75 with Cys86. Asn132 carries N-linked (GlcNAc...) asparagine glycosylation. Positions 211 and 212 each coordinate Zn(2+). A WSXWS motif motif is present at residues 215–219 (WSEWS). A glycan (N-linked (GlcNAc...) asparagine) is linked at Asn233. Residues 235 to 258 (TTVWIFVAVLSAVICLIMVWAVAL) traverse the membrane as a helical segment. The Cytoplasmic segment spans residues 259–581 (KGYSMMTCIL…PAKEAPPALP (323 aa)). The short motif at 267 to 275 (ILPPVPGPK) is the Box 1 motif element. Disordered stretches follow at residues 321 to 362 (EDQQ…LFSE) and 462 to 502 (LKPS…QDKT). The span at 329-349 (PSKEHMEQGVKPMHMDPDSDS) shows a compositional bias: basic and acidic residues.

The protein belongs to the type I cytokine receptor family. Type 1 subfamily. Interacts with SMARCA1. Interacts with NEK3 and VAV2 and this interaction is prolactin-dependent.

The protein resides in the membrane. Its function is as follows. This is a receptor for the anterior pituitary hormone prolactin. The protein is Prolactin receptor (PRLR) of Cervus elaphus (Red deer).